A 430-amino-acid chain; its full sequence is Crotonyl-CoA carboxylase/reductase (430 aa).

It belongs to the zinc-containing alcohol dehydrogenase family. Crotonyl-CoA carboxylase/reductase subfamily. In terms of assembly, homodimer. Requires Despite some sequence similarity to zinc-containing alcohol dehydrogenases, this enzyme does not bind any metals. as cofactor.

The catalysed reaction is (2S)-ethylmalonyl-CoA + NADP(+) = (2E)-butenoyl-CoA + CO2 + NADPH. The enzyme catalyses (S)-methylmalonyl-CoA + NADP(+) = acryloyl-CoA + CO2 + NADPH. It carries out the reaction butanoyl-CoA + NADP(+) = (2E)-butenoyl-CoA + NADPH + H(+). Its function is as follows. Catalyzes the NADPH-dependent reductive carboxylation of crotonyl-CoA ((2E)-butenoyl-CoA) to (2S)-ethylmalonyl-CoA, in the presence of CO2. This is a key reaction in the ethylmalonyl-CoA pathway for acetyl-CoA assimilation required for R.sphaeroides growth on acetate as sole carbon source. Is also able to accept acryloyl-CoA as an alternative substrate, yielding (2S)-methylmalonyl-CoA. To a lesser extent, when CO2 is absent, the enzyme also catalyzes the reduction of crotonyl-CoA to butanoyl-CoA. The protein is Crotonyl-CoA carboxylase/reductase of Cereibacter sphaeroides (strain ATCC 17023 / DSM 158 / JCM 6121 / CCUG 31486 / LMG 2827 / NBRC 12203 / NCIMB 8253 / ATH 2.4.1.) (Rhodobacter sphaeroides).